The chain runs to 210 residues: Orotate phosphoribosyltransferase (210 aa).

5-phospho-alpha-D-ribose 1-diphosphate-binding positions include R94, K98, H100, and 120–128; that span reads EDLISTGGS. S124 is an orotate binding site.

This sequence belongs to the purine/pyrimidine phosphoribosyltransferase family. PyrE subfamily. In terms of assembly, homodimer. Mg(2+) serves as cofactor.

The catalysed reaction is orotidine 5'-phosphate + diphosphate = orotate + 5-phospho-alpha-D-ribose 1-diphosphate. The protein operates within pyrimidine metabolism; UMP biosynthesis via de novo pathway; UMP from orotate: step 1/2. Its function is as follows. Catalyzes the transfer of a ribosyl phosphate group from 5-phosphoribose 1-diphosphate to orotate, leading to the formation of orotidine monophosphate (OMP). The protein is Orotate phosphoribosyltransferase of Bacillus anthracis (strain A0248).